The following is a 380-amino-acid chain: Chaperone protein DnaJ (380 aa).

Residues 5 to 69 (DFYEVLGVGR…QKKAAYDQYG (65 aa)) enclose the J domain. The CR-type zinc finger occupies 135 to 213 (GCSKEIRVPT…CHGQGRVEKT (79 aa)). C148, C151, C165, C168, C187, C190, C201, and C204 together coordinate Zn(2+). 4 CXXCXGXG motif repeats span residues 148-155 (CDSCDGSG), 165-172 (CGTCHGQG), 187-194 (CPHCHGRG), and 201-208 (CNSCHGQG).

The protein belongs to the DnaJ family. As to quaternary structure, homodimer. Requires Zn(2+) as cofactor.

The protein localises to the cytoplasm. Functionally, participates actively in the response to hyperosmotic and heat shock by preventing the aggregation of stress-denatured proteins and by disaggregating proteins, also in an autonomous, DnaK-independent fashion. Unfolded proteins bind initially to DnaJ; upon interaction with the DnaJ-bound protein, DnaK hydrolyzes its bound ATP, resulting in the formation of a stable complex. GrpE releases ADP from DnaK; ATP binding to DnaK triggers the release of the substrate protein, thus completing the reaction cycle. Several rounds of ATP-dependent interactions between DnaJ, DnaK and GrpE are required for fully efficient folding. Also involved, together with DnaK and GrpE, in the DNA replication of plasmids through activation of initiation proteins. The protein is Chaperone protein DnaJ of Photobacterium profundum (strain SS9).